Reading from the N-terminus, the 347-residue chain is WAT1-related protein At4g15540 (347 aa).

10 helical membrane passes run 15 to 35, 47 to 67, 73 to 93, 108 to 128, 139 to 159, 178 to 198, 210 to 230, 243 to 263, 276 to 296, and 299 to 319; these read VVPF…SILY, VFVF…SLIF, LPTA…LGLT, TLSS…AIFF, ATQA…VIVL, WIIG…WFIL, IAVV…VCLL, GFSL…GSVI, ISLF…IFLG, and LHLG…TVIW. Residues 30 to 158 enclose the EamA 1 domain; sequence GSSILYKAAT…VSISGALVIV (129 aa). Residues 216–317 enclose the EamA 2 domain; that stretch reads YNLCATLISG…VILSFGFYTV (102 aa).

Belongs to the drug/metabolite transporter (DMT) superfamily. Plant drug/metabolite exporter (P-DME) (TC 2.A.7.4) family.

It localises to the membrane. This Arabidopsis thaliana (Mouse-ear cress) protein is WAT1-related protein At4g15540.